The sequence spans 256 residues: Small ribosomal subunit protein eS1 (256 aa).

Alanine 2 is subject to N-acetylalanine; partial.

This sequence belongs to the eukaryotic ribosomal protein eS1 family. In terms of assembly, component of the small ribosomal subunit. Mature ribosomes consist of a small (40S) and a large (60S) subunit. The 40S subunit contains about 33 different proteins and 1 molecule of RNA (18S). The 60S subunit contains about 49 different proteins and 3 molecules of RNA (25S, 5.8S and 5S).

The protein localises to the cytoplasm. This is Small ribosomal subunit protein eS1 from Postia placenta (strain ATCC 44394 / Madison 698-R) (Brown rot fungus).